The following is a 956-amino-acid chain: Glycine dehydrogenase (decarboxylating) 2 (956 aa).

Position 706 is an N6-(pyridoxal phosphate)lysine (K706).

The protein belongs to the GcvP family. In terms of assembly, the glycine cleavage system is composed of four proteins: P, T, L and H. Requires pyridoxal 5'-phosphate as cofactor.

The enzyme catalyses N(6)-[(R)-lipoyl]-L-lysyl-[glycine-cleavage complex H protein] + glycine + H(+) = N(6)-[(R)-S(8)-aminomethyldihydrolipoyl]-L-lysyl-[glycine-cleavage complex H protein] + CO2. In terms of biological role, the glycine cleavage system catalyzes the degradation of glycine. The P protein binds the alpha-amino group of glycine through its pyridoxal phosphate cofactor; CO(2) is released and the remaining methylamine moiety is then transferred to the lipoamide cofactor of the H protein. This chain is Glycine dehydrogenase (decarboxylating) 2, found in Colwellia psychrerythraea (strain 34H / ATCC BAA-681) (Vibrio psychroerythus).